Reading from the N-terminus, the 268-residue chain is Embryonic abundant protein VF30.1 (268 aa).

The first 25 residues, 1-25 (MEFAHLTVLSLFCLAFVGITATSSG), serve as a signal peptide directing secretion. Residues 68 to 259 (LFFEHDLHPG…GNKAAAWVPN (192 aa)) enclose the BURP domain. An N-linked (GlcNAc...) asparagine glycan is attached at asparagine 259.

Seed.

The protein resides in the secreted. In Vicia faba (Broad bean), this protein is Embryonic abundant protein VF30.1.